The following is an 88-amino-acid chain: UPF0297 protein STER_1937 (88 aa).

Belongs to the UPF0297 family.

This is UPF0297 protein STER_1937 from Streptococcus thermophilus (strain ATCC BAA-491 / LMD-9).